Here is a 51-residue protein sequence, read N- to C-terminus: Lantibiotic streptococcin A-FF22 (51 aa).

A propeptide spanning residues 1–25 is cleaved from the precursor; it reads MEKNNEVINSIQEVSLEELDQIIGA. 2 cross-links (beta-methyllanthionine (Thr-Cys)) span residues 33–38 and 42–50; these read TISHEC and TWAFLATCC. The lanthionine (Ser-Cys) cross-link spans 35–49; the sequence is SHECHLNTWAFLATC. Thr48 carries the 2,3-didehydrobutyrine modification.

This sequence belongs to the type A lantibiotic family. Post-translationally, maturation of lantibiotics involves the enzymatic conversion of Thr, and Ser into dehydrated AA and the formation of thioether bonds with cysteine. This is followed by membrane translocation and cleavage of the modified precursor.

Its subcellular location is the secreted. The protein localises to the cell surface. Functionally, lanthionine-containing peptide antibiotic (lantibiotic) active on certain Gram-positive bacteria. The bactericidal activity of lantibiotics is based on depolarization of energized bacterial cytoplasmic membranes, initiated by the formation of aqueous transmembrane pores. This is Lantibiotic streptococcin A-FF22 (scnA) from Streptococcus pyogenes.